The chain runs to 141 residues: Cystatin (141 aa).

The first 26 residues, 1–26 (MVHFQLPVAAPLCLLCALLLLPSATM), serve as a signal peptide directing secretion. The 101-residue stretch at 29–129 (GGLSPRSVSD…CHFQVWSRPW (101 aa)) folds into the Cystatin domain. The Secondary area of contact motif lies at 73-77 (QVVAG). 2 disulfides stabilise this stretch: cysteine 91/cysteine 107 and cysteine 120/cysteine 140.

It belongs to the cystatin family. Expressed at a low level by the venom gland (at protein level).

It localises to the secreted. In terms of biological role, inhibits various C1 cysteine proteases including cathepsin L, papain and cathepsin B. This protein has no toxic activity and its function in the venom is unknown. It may play a role as a housekeeping or regulatory protein. The sequence is that of Cystatin from Naja kaouthia (Monocled cobra).